The sequence spans 199 residues: MTKVKICGLSTKEAVETAVSAGADYIGFVFAPSKRQVTLEEAAELAKLIPADVKKVGVFVSPSRVELLEAIDKVGLDLVQVHGQVADDLFENLPCASIQAVQVDGNGHVPNSQADYLLFDAPVAGSGQPFDWGQLDTTGLAQPFFIAGGLNEDNVVKAIQHFTPYAVDVSSGVETDGQKDHEKIRRFIERVKHGISGTK.

Belongs to the TrpF family.

The enzyme catalyses N-(5-phospho-beta-D-ribosyl)anthranilate = 1-(2-carboxyphenylamino)-1-deoxy-D-ribulose 5-phosphate. It participates in amino-acid biosynthesis; L-tryptophan biosynthesis; L-tryptophan from chorismate: step 3/5. The chain is N-(5'-phosphoribosyl)anthranilate isomerase from Streptococcus pneumoniae serotype 4 (strain ATCC BAA-334 / TIGR4).